Reading from the N-terminus, the 283-residue chain is Polyamine aminopropyltransferase (283 aa).

One can recognise a PABS domain in the interval Glu-2–Lys-238. Residue Gln-31 coordinates S-methyl-5'-thioadenosine. Spermidine-binding residues include His-62 and Asp-86. Residues Glu-106 and Asp-137–Gly-138 contribute to the S-methyl-5'-thioadenosine site. The active-site Proton acceptor is Asp-156. Residue Asp-156–Asp-159 coordinates spermidine. Position 163 (Pro-163) interacts with S-methyl-5'-thioadenosine.

The protein belongs to the spermidine/spermine synthase family. Homodimer or homotetramer.

The protein resides in the cytoplasm. It catalyses the reaction S-adenosyl 3-(methylsulfanyl)propylamine + putrescine = S-methyl-5'-thioadenosine + spermidine + H(+). The protein operates within amine and polyamine biosynthesis; spermidine biosynthesis; spermidine from putrescine: step 1/1. In terms of biological role, catalyzes the irreversible transfer of a propylamine group from the amino donor S-adenosylmethioninamine (decarboxy-AdoMet) to putrescine (1,4-diaminobutane) to yield spermidine. The chain is Polyamine aminopropyltransferase from Clostridioides difficile (strain 630) (Peptoclostridium difficile).